A 546-amino-acid chain; its full sequence is Glutamate--tRNA ligase (546 aa).

Residues 41-51 (PSPTGFQHIGG) carry the 'HIGH' region motif. The 'KMSKS' region signature appears at 293–297 (KLSKR). Lys296 contributes to the ATP binding site.

It belongs to the class-I aminoacyl-tRNA synthetase family. Glutamate--tRNA ligase type 1 subfamily. As to quaternary structure, monomer.

The protein localises to the cytoplasm. It catalyses the reaction tRNA(Glu) + L-glutamate + ATP = L-glutamyl-tRNA(Glu) + AMP + diphosphate. Its function is as follows. Catalyzes the attachment of glutamate to tRNA(Glu) in a two-step reaction: glutamate is first activated by ATP to form Glu-AMP and then transferred to the acceptor end of tRNA(Glu). This is Glutamate--tRNA ligase from Clostridium perfringens (strain 13 / Type A).